The chain runs to 84 residues: Magnetosome protein MamG (84 aa).

At 1–3 (MIK) the chain is on the cytoplasmic side. A helical transmembrane segment spans residues 4 to 24 (GIAGVGGTALGVGGGVAAPPV). At 25 to 40 (SAAAVGSTLLAGKGVC) the chain is on the lumenal side. An LG repeat region spans residues 41 to 48 (LGLGLGLG). The helical transmembrane segment at 41 to 61 (LGLGLGLGAWGPVLLGVAGLA) threads the bilayer. Topologically, residues 62 to 84 (CAASLCDYLKNRKAQAEASAEPA) are cytoplasmic.

Belongs to the magnetosome MamG (TC 9.B.95) protein family.

The protein localises to the magnetosome membrane. In terms of biological role, plays a role in regulating magnetite crystal size. The chain is Magnetosome protein MamG from Magnetospirillum gryphiswaldense (strain DSM 6361 / JCM 21280 / NBRC 15271 / MSR-1).